The following is a 493-amino-acid chain: Cardiolipin synthase 1 (493 aa).

2 consecutive transmembrane segments (helical) span residues 13–33 (FTII…IIIF) and 45–65 (WAWL…YLFF). 2 PLD phosphodiesterase domains span residues 228–255 (MNNR…GDEY) and 406–433 (ENGF…DFRS). Residues His-233, Lys-235, Asp-240, His-411, Lys-413, and Asp-418 contribute to the active site.

It belongs to the phospholipase D family. Cardiolipin synthase subfamily.

It is found in the cell membrane. It carries out the reaction 2 a 1,2-diacyl-sn-glycero-3-phospho-(1'-sn-glycerol) = a cardiolipin + glycerol. In terms of biological role, catalyzes the reversible phosphatidyl group transfer from one phosphatidylglycerol molecule to another to form cardiolipin (CL) (diphosphatidylglycerol) and glycerol. This Staphylococcus aureus (strain MRSA252) protein is Cardiolipin synthase 1 (cls1).